A 337-amino-acid polypeptide reads, in one-letter code: MLYSIVKPWLFRLDAERAHDFTLKNLKRLERSGLLNLYPRPPKCKQRQVMGINFPNPVGLAAGLDKNGAYIDALAGLGFGFIEIGTITPRPQPGNPKPRMFRLPEAQGVINRFGFNNLGVDVLLRNVAATKYKGVLGINIGKNFDTPNERAVDDYLHCLRKVYPYAHYVTVNISSPNTKNLRALQEKEALGQLLHALKQEQQVLADQHGRYVPIALKIAPDLDEGQVADIAALLMKHQFDGVIATNTTLARDMVQALPCAQEAGGLSGAPLRDRSTAVIQSLSNHLAGALPIIGVGGILSGEDAEQKIKAGASLVQVYSGLVYRGPVLVDDICRTLG.

FMN-binding positions include 62 to 66 (AGLDK) and Thr86. Lys66 lines the substrate pocket. 111-115 (NRFGF) contacts substrate. Positions 139 and 172 each coordinate FMN. Asn172 contacts substrate. Ser175 functions as the Nucleophile in the catalytic mechanism. Asn177 contributes to the substrate binding site. FMN contacts are provided by Lys217 and Thr245. 246-247 (NT) is a binding site for substrate. FMN-binding positions include Gly268, Gly297, and 318–319 (YS).

Belongs to the dihydroorotate dehydrogenase family. Type 2 subfamily. In terms of assembly, monomer. FMN serves as cofactor.

The protein localises to the cell membrane. It carries out the reaction (S)-dihydroorotate + a quinone = orotate + a quinol. It participates in pyrimidine metabolism; UMP biosynthesis via de novo pathway; orotate from (S)-dihydroorotate (quinone route): step 1/1. Catalyzes the conversion of dihydroorotate to orotate with quinone as electron acceptor. This Methylobacillus flagellatus (strain ATCC 51484 / DSM 6875 / VKM B-1610 / KT) protein is Dihydroorotate dehydrogenase (quinone).